The following is an 86-amino-acid chain: Small ribosomal subunit protein bS16 (86 aa).

This sequence belongs to the bacterial ribosomal protein bS16 family.

The polypeptide is Small ribosomal subunit protein bS16 (Stenotrophomonas maltophilia (strain K279a)).